The primary structure comprises 140 residues: UPF0102 protein ACIAD1132 (140 aa).

Belongs to the UPF0102 family.

This Acinetobacter baylyi (strain ATCC 33305 / BD413 / ADP1) protein is UPF0102 protein ACIAD1132.